The chain runs to 248 residues: 5'-nucleotidase SurE (248 aa).

A divalent metal cation-binding residues include Asp8, Asp9, Ser39, and Asn91.

The protein belongs to the SurE nucleotidase family. A divalent metal cation is required as a cofactor.

It localises to the cytoplasm. It catalyses the reaction a ribonucleoside 5'-phosphate + H2O = a ribonucleoside + phosphate. In terms of biological role, nucleotidase that shows phosphatase activity on nucleoside 5'-monophosphates. The protein is 5'-nucleotidase SurE of Shewanella amazonensis (strain ATCC BAA-1098 / SB2B).